The primary structure comprises 304 residues: Homoserine kinase (304 aa).

90–100 (PLARGLGSSAS) contacts ATP.

It belongs to the GHMP kinase family. Homoserine kinase subfamily.

The protein localises to the cytoplasm. The enzyme catalyses L-homoserine + ATP = O-phospho-L-homoserine + ADP + H(+). It participates in amino-acid biosynthesis; L-threonine biosynthesis; L-threonine from L-aspartate: step 4/5. In terms of biological role, catalyzes the ATP-dependent phosphorylation of L-homoserine to L-homoserine phosphate. In Staphylococcus aureus (strain NCTC 8325 / PS 47), this protein is Homoserine kinase.